Reading from the N-terminus, the 905-residue chain is MSYSKKDDDGDESIFANVNQVTVTQDARAFNSSSISPRKSRRLLSKIAYLIYTGEHFQEKQATELFFGITKLFQHKDPSLRQFVYIIIKELSVVAEDVIMITSSIMKDTATGRETIYRPNAIRSLIRVIDANTVPAIERILTTGIVDPISAVASAALVSAYHLYPVAKDIVSRWNNEVQDAVTSHNVGRKVASSPFFTSTLGYTPNASGISQYHALGLLYRIRRHDSIAMNKLLQLLVSNLGTVSNSHAFVMLIRYISSLMDQNTQFRDQMVPFLHGWLKSKGDMVNLEVARNMVRLKNISDDDLQPVVSVLKIFLSSHRSATRFSAIRTLNELAMTRPHLVHSCNLNIESLITDVNRSIATYAITTLLKTGNDESVDRLMKQIVTFMSDISDNFKIIVVDAIRSLCLKFPRKQDSMLTFLSNILCDEGGYEFKRAAVDAISDMIKYIPESKERALAELCEFIEDCEYPKIAVRILSILGEEGPKASEPTRFIRYIYNRIMLENAIVRSAAVSALTKFGLNAEDKFVQRSVKVILTRCLEDADDEVRDRAAFSVKALEDRDAFLPVVKSDKIPSLPALERSLVIYISERKFGQGFDIKSVPVLSQEEIDAENLRIKKATTEVEFTEVTPAEDQNALASSNIETEFLNALESVSEFNEYGPVLKSSPSPIELTEQETEFVVKVVKHVFKDHLVVQFQLHNTLSEVILENAVVVSTPSTDDLVEECVVPAAIVSGEPVSIFVSFKFNDSVPYPLTTLTNTLQFTTKEIDIHTGEPEEEGYEDEYKIDDLDVSAGDFISPAYESNFDGLFDSLEHEASEVYVLSLLDSFRSTCSRVAELLQMQPLEGTENPTDKPVHVMKLSGKLVNGEKVLALVKMAHSKDGEGITIKVIARGESDSSVELVVGGIA.

5 HEAT repeats span residues 265–302 (TQFR…NISD), 303–340 (DDLQ…TRPH), 374–412 (DESV…KFPR), 414–450 (QDSM…YIPE), and 525–563 (KFVQ…RDAF). Phosphoserine is present on Ser-604.

Belongs to the COPG family. Oligomeric complex that consists of at least the alpha, beta, beta', gamma, delta, epsilon and zeta subunits.

It localises to the cytoplasm. The protein resides in the golgi apparatus membrane. Its subcellular location is the cytoplasmic vesicle. It is found in the COPI-coated vesicle membrane. Its function is as follows. The coatomer is a cytosolic protein complex that binds to dilysine motifs and reversibly associates with Golgi non-clathrin-coated vesicles, which further mediate biosynthetic protein transport from the ER, via the Golgi up to the trans Golgi network. Coatomer complex is required for budding from Golgi membranes, and is essential for the retrograde Golgi-to-ER transport of dilysine-tagged proteins. This Schizosaccharomyces pombe (strain 972 / ATCC 24843) (Fission yeast) protein is Probable coatomer subunit gamma (sec21).